Consider the following 113-residue polypeptide: Signal peptidase complex subunit 1 (113 aa).

Topologically, residues 1-32 (MDGMIAMLPAPLQQLSSHIDFQGQKVAERTYQ) are cytoplasmic. A helical membrane pass occupies residues 33–53 (VILTLAGIIGFFVGYSTQQLS). Residues 54 to 57 (YAMY) are Lumenal-facing. Residues 58–78 (TVMGAAVFTALIILPPWPFLF) form a helical membrane-spanning segment. Residues 79–113 (RKNPIVWQTPIEEQEASSSSDNEKKDKKKETKKTK) lie on the Cytoplasmic side of the membrane. The disordered stretch occupies residues 89–113 (IEEQEASSSSDNEKKDKKKETKKTK).

The protein belongs to the SPCS1 family. Component of the signal peptidase complex (SPC) composed of a catalytic subunit sec-11 and three accessory subunits spcs-1, spcs-2 and spcs-3. The complex induces a local thinning of the ER membrane which is used to measure the length of the signal peptide (SP) h-region of protein substrates. This ensures the selectivity of the complex towards h-regions shorter than 18-20 amino acids.

It localises to the endoplasmic reticulum membrane. Functionally, component of the signal peptidase complex (SPC) which catalyzes the cleavage of N-terminal signal sequences from nascent proteins as they are translocated into the lumen of the endoplasmic reticulum. Dispensable for SPC enzymatic activity. The polypeptide is Signal peptidase complex subunit 1 (Caenorhabditis briggsae).